Here is a 137-residue protein sequence, read N- to C-terminus: Large ribosomal subunit protein uL22c (137 aa).

Belongs to the universal ribosomal protein uL22 family. As to quaternary structure, part of the 50S ribosomal subunit.

The protein localises to the plastid. Its subcellular location is the chloroplast. Functionally, this protein binds specifically to 23S rRNA. The globular domain of the protein is located near the polypeptide exit tunnel on the outside of the subunit, while an extended beta-hairpin is found that lines the wall of the exit tunnel in the center of the 70S ribosome. In Oenothera argillicola (Appalachian evening primrose), this protein is Large ribosomal subunit protein uL22c (rpl22).